A 149-amino-acid chain; its full sequence is Inner membrane protein YfeZ (149 aa).

At 1–18 the chain is on the cytoplasmic side; that stretch reads MKSTEFHPVHYDAHGRLR. A helical transmembrane segment spans residues 19–39; the sequence is LPLLFWLVLLLQARTWVLFVI. Residues 40-58 are Periplasmic-facing; it reads AGASREQGTALLNLFYPDH. A helical transmembrane segment spans residues 59–79; that stretch reads DNFWLGLIPGIPAVLAFLLSG. The Cytoplasmic portion of the chain corresponds to 80 to 89; it reads RRATFPRTWR. Residues 90–110 form a helical membrane-spanning segment; it reads VLYFLLLLAQVVLLCWQPWLW. The Periplasmic segment spans residues 111-115; the sequence is LNGES. A helical membrane pass occupies residues 116–136; sequence VSGIGLALVVADIVALIWLLT. At 137–149 the chain is on the cytoplasmic side; that stretch reads NRRLRACFYEVKE.

The protein localises to the cell inner membrane. This chain is Inner membrane protein YfeZ (yfeZ), found in Escherichia coli (strain K12).